The primary structure comprises 381 residues: L-lactate dehydrogenase (381 aa).

Positions 1 to 380 (MIISSASDYR…KPEALVDLSK (380 aa)) constitute an FMN hydroxy acid dehydrogenase domain. Residue Y24 coordinates substrate. 2 residues coordinate FMN: S106 and Q127. Position 129 (Y129) interacts with substrate. T155 provides a ligand contact to FMN. R164 serves as a coordination point for substrate. K251 contacts FMN. H275 (proton acceptor) is an active-site residue. R278 lines the substrate pocket. 306 to 330 (DSGIRNGLDIVRMLALGADATMLGR) lines the FMN pocket.

This sequence belongs to the FMN-dependent alpha-hydroxy acid dehydrogenase family. It depends on FMN as a cofactor.

The protein localises to the cell inner membrane. It carries out the reaction (S)-lactate + A = pyruvate + AH2. Its function is as follows. Catalyzes the conversion of L-lactate to pyruvate. Is coupled to the respiratory chain. This is L-lactate dehydrogenase from Haemophilus influenzae (strain 86-028NP).